The sequence spans 84 residues: CDC42 small effector protein 2-A (84 aa).

S-palmitoyl cysteine attachment occurs at residues Cys-10 and Cys-11. One can recognise a CRIB domain in the interval 29 to 42 (IGEPTNFVHTAHVG).

This sequence belongs to the CDC42SE/SPEC family.

The protein localises to the cytoplasm. It localises to the cytoskeleton. Its subcellular location is the cell membrane. Functionally, probably involved in the organization of the actin cytoskeleton by acting downstream of CDC42, inducing actin filament assembly. The protein is CDC42 small effector protein 2-A (cdc42se2-a) of Xenopus laevis (African clawed frog).